The following is a 56-amino-acid chain: Large ribosomal subunit protein bL32 (56 aa).

The interval 1–56 (MAVPARRTSKAKKNKRRTHKGLTTPGLSRDSETGEYRMSHRISPDGTYKGRTIIEK) is disordered. The span at 7–20 (RTSKAKKNKRRTHK) shows a compositional bias: basic residues. Over residues 29–38 (RDSETGEYRM) the composition is skewed to basic and acidic residues.

The protein belongs to the bacterial ribosomal protein bL32 family.

The chain is Large ribosomal subunit protein bL32 from Listeria monocytogenes serotype 4a (strain HCC23).